The sequence spans 100 residues: uncharacterized protein (100 aa).

2 helical membrane passes run 1-21 (MLVLVFLIGLSACFYVYYKVK) and 54-74 (MILFHSVLTLVIGGIFIVIGA).

The protein resides in the cell membrane. This is an uncharacterized protein from Bacillus subtilis (strain 168).